A 186-amino-acid chain; its full sequence is UPF0301 protein Neut_0448 (186 aa).

Belongs to the UPF0301 (AlgH) family.

The polypeptide is UPF0301 protein Neut_0448 (Nitrosomonas eutropha (strain DSM 101675 / C91 / Nm57)).